Reading from the N-terminus, the 607-residue chain is Rap1 GTPase-GDP dissociation stimulator 1 (607 aa).

ARM repeat units follow at residues 89–131 (GLIS…DQAG) and 170–211 (DSLQ…NLAE). Residues 122–170 (EGRSAVDQAGGAQIVIDHLRSLCGRTDPASEKLMTVFCGMLMNYSNEND) form a prevents binding to prenylated RHOA region. Lys-230 bears the N6-acetyllysine mark. ARM repeat units lie at residues 347–390 (DGNC…NLAI), 391–431 (PVVN…MLID), and 479–519 (SKDV…LIAA).

In terms of assembly, interacts with RABL3. Interacts with RHOT1. As to quaternary structure, interacts with unprenylated RHOA; the interaction is direct. Interacts with RAP1A. Interacts with KRAS. Interacts with RAC1. Interacts with RAP1B. Preferentially interacts with unprenylated GTPases that will become geranylgeranylated. May also interact with prenylated GTPases. Interacts with prenylated RHOA; the interaction is direct and in a 1:1 stoichiometry. Interacts with RAP1A. Interacts with KRAS. Interacts with RAC1. Interacts with RAP1B. Preferentially interacts with prenylated GTPases. Serotonylated on Gln residues by TGM2 in response to hypoxia, leading to its inactivation.

Its subcellular location is the cytoplasm. The protein resides in the cytosol. It localises to the endoplasmic reticulum. The protein localises to the mitochondrion. It is found in the nucleus. Functionally, acts as a GEF (guanine nucleotide exchange factor) for the Rho family of small GTP-binding proteins (G proteins) that stimulates the dissociation of GDP to enable subsequent binding of GTP. Additionally, appears to chaperone the processing and/or trafficking of small GTPases containing a C-terminal polybasic region independently of GEF activity. Targets include RAP1A/RAP1B, RHOA, RHOB, RHOC, RAC1 and KRAS. Regulates mitochondrial dynamics by controlling RHOT function to promote mitochondrial fission during high calcium conditions. Able to promote the Ca(2+) release from the endoplasmic reticulum via both inositol trisphosphate (Ins3P) and ryanodine sensitive receptors leading to a enhanced mitochondrial Ca(2+) uptake. Acts as a GEF (guanine nucleotide exchange factor) for unprenylated RHOA. Chaperones the entry and passage of small GTPases through the prenylation pathway. Recognizes the last amino acid in the GTPase C-terminal CAAX motif with a preference for 'Leu' over 'Met', indicating involvement in the geranylgeranylation pathway. May also recognize prenylated GTPases. Its function is as follows. Acts as a GEF (guanine nucleotide exchange factor) for prenylated RHOA. Acts as a GEF for RHOC. Chaperones the downstream trafficking and/or processing of small newly prenylated GTPases. Escorts RAC1 to the nucleus. The protein is Rap1 GTPase-GDP dissociation stimulator 1 of Mus musculus (Mouse).